The chain runs to 262 residues: Mitochondrial calcium uniporter regulator 1 (262 aa).

A coiled-coil region spans residues 138 to 175 (EKSEFSALRTQNEKVKIELQQLKKQLNDSIVKVRASNK). A helical transmembrane segment spans residues 239-261 (TIKYLAGSVFTCLTIALGFYRLW).

It belongs to the CCDC90 family.

Its subcellular location is the mitochondrion inner membrane. In terms of biological role, key regulator of mitochondrial calcium uniporter (mcu) required for calcium entry into mitochondrion. The protein is Mitochondrial calcium uniporter regulator 1 of Xenopus tropicalis (Western clawed frog).